A 212-amino-acid chain; its full sequence is Large ribosomal subunit protein uL3 (212 aa).

The segment at lysine 130–arginine 155 is disordered.

It belongs to the universal ribosomal protein uL3 family. In terms of assembly, part of the 50S ribosomal subunit. Forms a cluster with proteins L14 and L19.

Functionally, one of the primary rRNA binding proteins, it binds directly near the 3'-end of the 23S rRNA, where it nucleates assembly of the 50S subunit. This chain is Large ribosomal subunit protein uL3, found in Rippkaea orientalis (strain PCC 8801 / RF-1) (Cyanothece sp. (strain PCC 8801)).